The chain runs to 185 residues: Capsid protein (185 aa).

The interval 136 to 185 is disordered; it reads NAPILSTLPETTVVRRRDRGRSPRRRTPSPRRRRSQSPRRRRSQSRESQC. Positions 149-178 are enriched in basic residues; the sequence is VRRRDRGRSPRRRTPSPRRRRSQSPRRRRS. A phosphoserine; by host mark is found at Ser157, Ser164, and Ser172. The 1; half-length repeat unit spans residues 157 to 163; sequence SPRRRTP. The interval 157 to 179 is 3 X 8 AA repeats of S-P-R-R-R-[PR]-S-Q; the sequence is SPRRRTPSPRRRRSQSPRRRRSQ. The short motif at 160–177 is the Bipartite nuclear localization signal element; it reads RRTPSPRRRRSQSPRRRR. A run of 2 repeats spans residues 164–171 and 172–179. The interval 179-185 is RNA binding; it reads QSRESQC.

It belongs to the orthohepadnavirus core antigen family. Homodimerizes, then multimerizes. Interacts with cytosol exposed regions of viral L glycoprotein present in the reticulum-to-Golgi compartment. Interacts with human FLNB. Phosphorylated form interacts with host importin alpha; this interaction depends on the exposure of the NLS, which itself depends upon genome maturation and/or phosphorylation of the capsid protein. Interacts with host NUP153. Post-translationally, phosphorylated by host SRPK1, SRPK2, and maybe protein kinase C or GAPDH. Phosphorylation is critical for pregenomic RNA packaging. Protein kinase C phosphorylation is stimulated by HBx protein and may play a role in transport of the viral genome to the nucleus at the late step during the viral replication cycle.

It is found in the virion. Its subcellular location is the host cytoplasm. Self assembles to form an icosahedral capsid. Most capsids appear to be large particles with an icosahedral symmetry of T=4 and consist of 240 copies of capsid protein, though a fraction forms smaller T=3 particles consisting of 180 capsid proteins. Entering capsids are transported along microtubules to the nucleus. Phosphorylation of the capsid is thought to induce exposure of nuclear localization signal in the C-terminal portion of the capsid protein that allows binding to the nuclear pore complex via the importin (karyopherin-) alpha and beta. Capsids are imported in intact form through the nuclear pore into the nuclear basket, where it probably binds NUP153. Only capsids that contain the mature viral genome can release the viral DNA and capsid protein into the nucleoplasm. Immature capsids get stuck in the basket. Capsids encapsulate the pre-genomic RNA and the P protein. Pre-genomic RNA is reverse-transcribed into DNA while the capsid is still in the cytoplasm. The capsid can then either be directed to the nucleus, providing more genomes for transcription, or bud through the endoplasmic reticulum to provide new virions. The polypeptide is Capsid protein (Homo sapiens (Human)).